A 1165-amino-acid polypeptide reads, in one-letter code: DNA-directed RNA polymerase III subunit RPC2 (1165 aa).

Positions 1-21 are disordered; the sequence is MGVNTAGDPQKSQPKINKGGI. Zn(2+) contacts are provided by Cys1111, Cys1114, Cys1123, and Cys1126. The segment at 1111-1126 adopts a C4-type zinc-finger fold; sequence CGQCGLLGYKGWCNSC.

This sequence belongs to the RNA polymerase beta chain family. Component of the RNA polymerase III (Pol III) complex consisting of 17 subunits.

Its subcellular location is the nucleus. It catalyses the reaction RNA(n) + a ribonucleoside 5'-triphosphate = RNA(n+1) + diphosphate. Functionally, DNA-dependent RNA polymerase catalyzes the transcription of DNA into RNA using the four ribonucleoside triphosphates as substrates. Second largest core component of RNA polymerase III which synthesizes small RNAs, such as 5S rRNA and tRNAs. Proposed to contribute to the polymerase catalytic activity and forms the polymerase active center together with the largest subunit. Pol III is composed of mobile elements and RPC2 is part of the core element with the central large cleft and probably a clamp element that moves to open and close the cleft. The protein is DNA-directed RNA polymerase III subunit RPC2 (rpc2) of Schizosaccharomyces pombe (strain 972 / ATCC 24843) (Fission yeast).